Consider the following 356-residue polypeptide: tRNA N6-adenosine threonylcarbamoyltransferase (356 aa).

3 residues coordinate a divalent metal cation: H122, H126, and Y143. Residues 143-147 (YVSGG), D175, G190, E194, and N287 contribute to the substrate site. D315 contributes to the a divalent metal cation binding site.

This sequence belongs to the KAE1 / TsaD family. As to quaternary structure, component of the EKC/KEOPS complex composed of at least BUD32, CGI121, GON7, KAE1 and PCC1; the whole complex dimerizes. A divalent metal cation is required as a cofactor.

It localises to the cytoplasm. It is found in the nucleus. It carries out the reaction L-threonylcarbamoyladenylate + adenosine(37) in tRNA = N(6)-L-threonylcarbamoyladenosine(37) in tRNA + AMP + H(+). Component of the EKC/KEOPS complex that is required for the formation of a threonylcarbamoyl group on adenosine at position 37 (t(6)A37) in tRNAs that read codons beginning with adenine. The complex is probably involved in the transfer of the threonylcarbamoyl moiety of threonylcarbamoyl-AMP (TC-AMP) to the N6 group of A37. KAE1 likely plays a direct catalytic role in this reaction, but requires other protein(s) of the complex to fulfill this activity. The EKC/KEOPS complex also promotes both telomere uncapping and telomere elongation. The complex is required for efficient recruitment of transcriptional coactivators. The polypeptide is tRNA N6-adenosine threonylcarbamoyltransferase (Chaetomium globosum (strain ATCC 6205 / CBS 148.51 / DSM 1962 / NBRC 6347 / NRRL 1970) (Soil fungus)).